A 294-amino-acid chain; its full sequence is Phosphatidylserine decarboxylase proenzyme (294 aa).

Residues Asp113, His169, and Ser256 each act as charge relay system; for autoendoproteolytic cleavage activity in the active site. The Schiff-base intermediate with substrate; via pyruvic acid; for decarboxylase activity role is filled by Ser256. Ser256 carries the post-translational modification Pyruvic acid (Ser); by autocatalysis.

The protein belongs to the phosphatidylserine decarboxylase family. PSD-B subfamily. Prokaryotic type II sub-subfamily. Heterodimer of a large membrane-associated beta subunit and a small pyruvoyl-containing alpha subunit. It depends on pyruvate as a cofactor. Post-translationally, is synthesized initially as an inactive proenzyme. Formation of the active enzyme involves a self-maturation process in which the active site pyruvoyl group is generated from an internal serine residue via an autocatalytic post-translational modification. Two non-identical subunits are generated from the proenzyme in this reaction, and the pyruvate is formed at the N-terminus of the alpha chain, which is derived from the carboxyl end of the proenzyme. The autoendoproteolytic cleavage occurs by a canonical serine protease mechanism, in which the side chain hydroxyl group of the serine supplies its oxygen atom to form the C-terminus of the beta chain, while the remainder of the serine residue undergoes an oxidative deamination to produce ammonia and the pyruvoyl prosthetic group on the alpha chain. During this reaction, the Ser that is part of the protease active site of the proenzyme becomes the pyruvoyl prosthetic group, which constitutes an essential element of the active site of the mature decarboxylase.

The protein resides in the cell membrane. It carries out the reaction a 1,2-diacyl-sn-glycero-3-phospho-L-serine + H(+) = a 1,2-diacyl-sn-glycero-3-phosphoethanolamine + CO2. Its pathway is phospholipid metabolism; phosphatidylethanolamine biosynthesis; phosphatidylethanolamine from CDP-diacylglycerol: step 2/2. Its function is as follows. Catalyzes the formation of phosphatidylethanolamine (PtdEtn) from phosphatidylserine (PtdSer). The protein is Phosphatidylserine decarboxylase proenzyme of Clostridium perfringens (strain SM101 / Type A).